A 434-amino-acid polypeptide reads, in one-letter code: N-acylneuraminate cytidylyltransferase (434 aa).

Position 1 is an N-acetylmethionine (methionine 1). Residues 1 to 42 form a disordered region; sequence MDSVEKGAATSVSNPRGRPSRGRPPKLQRNSRGGQGRGVEKP. The BC1 motif signature appears at 15–31; sequence PRGRPSRGRPPKLQRNS. Omega-N-methylarginine is present on residues arginine 37 and arginine 52. Substrate is bound by residues arginine 52, asparagine 62, arginine 111, serine 120, serine 122, and glutamine 143. The BC2 motif signature appears at 200-206; sequence KRPRRQD. Arginine 201 is a catalytic residue. The BC3 motif motif lies at 269–276; sequence KEKLKEIK.

Belongs to the CMP-NeuNAc synthase family. Homotetramer; the active enzyme is formed by a dimer of dimers. Ubiquitously expressed. Expressed in pancreas, kidney, liver, skeletal muscle, lung, placenta, brain, heart, colon, PBL, small intestine, ovary, testis, prostate, thymus and spleen.

It is found in the nucleus. The catalysed reaction is an N-acylneuraminate + CTP = a CMP-N-acyl-beta-neuraminate + diphosphate. The protein operates within amino-sugar metabolism; N-acetylneuraminate metabolism. Catalyzes the activation of N-acetylneuraminic acid (NeuNAc) to cytidine 5'-monophosphate N-acetylneuraminic acid (CMP-NeuNAc), a substrate required for the addition of sialic acid. Has some activity toward NeuNAc, N-glycolylneuraminic acid (Neu5Gc) or 2-keto-3-deoxy-D-glycero-D-galacto-nononic acid (KDN). The sequence is that of N-acylneuraminate cytidylyltransferase (CMAS) from Homo sapiens (Human).